Reading from the N-terminus, the 195-residue chain is Small ribosomal subunit protein uS4B (195 aa).

The S4 RNA-binding domain occupies 107 to 181 (RRLQTQVYKL…VARRNAARKA (75 aa)). The segment at 161–195 (TSPFGGARPGRVARRNAARKAEASGEAAEEAEDEE) is disordered. A Glycyl lysine isopeptide (Lys-Gly) (interchain with G-Cter in ubiquitin) cross-link involves residue Lys180. Residue Ser184 is modified to Phosphoserine.

The protein belongs to the universal ribosomal protein uS4 family. Component of the small ribosomal subunit (SSU). Mature yeast ribosomes consist of a small (40S) and a large (60S) subunit. The 40S small subunit contains 1 molecule of ribosomal RNA (18S rRNA) and 33 different proteins (encoded by 57 genes). The large 60S subunit contains 3 rRNA molecules (25S, 5.8S and 5S rRNA) and 46 different proteins (encoded by 81 genes). Interacts with snoRNA U3. uS11 interacts with MPP10. Component of the ribosomal small subunit (SSU) processome composed of at least 40 protein subunits and snoRNA U3.

It localises to the cytoplasm. The protein resides in the nucleus. The protein localises to the nucleolus. Component of the ribosome, a large ribonucleoprotein complex responsible for the synthesis of proteins in the cell. The small ribosomal subunit (SSU) binds messenger RNAs (mRNAs) and translates the encoded message by selecting cognate aminoacyl-transfer RNA (tRNA) molecules. The large subunit (LSU) contains the ribosomal catalytic site termed the peptidyl transferase center (PTC), which catalyzes the formation of peptide bonds, thereby polymerizing the amino acids delivered by tRNAs into a polypeptide chain. The nascent polypeptides leave the ribosome through a tunnel in the LSU and interact with protein factors that function in enzymatic processing, targeting, and the membrane insertion of nascent chains at the exit of the ribosomal tunnel. uS4 is involved in nucleolar processing of pre-18S ribosomal RNA and ribosome assembly. The protein is Small ribosomal subunit protein uS4B of Saccharomyces cerevisiae (strain ATCC 204508 / S288c) (Baker's yeast).